The chain runs to 111 residues: Large ribosomal subunit protein eL30 (111 aa).

This sequence belongs to the eukaryotic ribosomal protein eL30 family.

This chain is Large ribosomal subunit protein eL30 (RPL30), found in Oryza sativa subsp. japonica (Rice).